Reading from the N-terminus, the 1391-residue chain is DNA-directed RNA polymerase subunit beta (1391 aa).

Belongs to the RNA polymerase beta chain family. In terms of assembly, the RNAP catalytic core consists of 2 alpha, 1 beta, 1 beta' and 1 omega subunit. When a sigma factor is associated with the core the holoenzyme is formed, which can initiate transcription.

The catalysed reaction is RNA(n) + a ribonucleoside 5'-triphosphate = RNA(n+1) + diphosphate. Functionally, DNA-dependent RNA polymerase catalyzes the transcription of DNA into RNA using the four ribonucleoside triphosphates as substrates. The sequence is that of DNA-directed RNA polymerase subunit beta from Granulibacter bethesdensis (strain ATCC BAA-1260 / CGDNIH1).